The sequence spans 396 residues: RNA-binding motif protein, X chromosome (396 aa).

N-acetylmethionine; in Heterogeneous nuclear ribonucleoprotein G; alternate is present on Met-1. Val-2 carries the post-translational modification N-acetylvaline; in Heterogeneous nuclear ribonucleoprotein G, N-terminally processed. The RRM domain maps to 8 to 86 (GKLFIGGLNL…KAIKVAQATK (79 aa)). Lys-22 participates in a covalent cross-link: Glycyl lysine isopeptide (Lys-Gly) (interchain with G-Cter in SUMO2). Lys-30 carries the post-translational modification N6-acetyllysine. Glycyl lysine isopeptide (Lys-Gly) (interchain with G-Cter in SUMO2) cross-links involve residues Lys-80 and Lys-86. Residues 84–396 (ATKPAFESGR…RGGGGGRSRY (313 aa)) are disordered. Residue Ser-91 is modified to Phosphoserine. Arg-122, Arg-141, Arg-162, and Arg-170 each carry omega-N-methylarginine. A compositionally biased stretch (pro residues) spans 148–162 (RGPPPPRRAGPPPKR). Basic and acidic residues-rich tracts occupy residues 185–205 (RGRD…RRDP) and 241–275 (YTYR…DYAD). Residues 186–236 (GRDGYEGPPRRDPPPPRRDPYLGSREGGYSPRDGYSSRDYSSARDARDFAP) form a necessary for the association to nascent RNAPII transcripts and nuclear localization region. Residues 323–332 (YGGGRDGYAG) are compositionally biased toward gly residues. Over residues 334–350 (RSERYSGGRDRVGRADR) the composition is skewed to basic and acidic residues. Phosphoserine is present on residues Ser-335 and Ser-355. Positions 336-396 (ERYSGGRDRV…RGGGGGRSRY (61 aa)) are necessary for RNA-binding.

As to quaternary structure, homomultimer. Found in the supraspliceosome complex. Identified in the spliceosome C complex. Forms a complex with ILF2, ILF3, YLPM1, KHDRBS1, NCOA5 and PPP1CA. Interacts with CLK2, KHDRBS2, KHDRBS3, SAFB/SAFB1, TRA2B and YTHDC1. Interacts with ERAP1; the interaction is RNA-independent. Post-translationally, O-glycosylated. Arg-185 is dimethylated, probably to asymmetric dimethylarginine.

The protein resides in the nucleus. Its function is as follows. RNA-binding protein that plays several role in the regulation of pre- and post-transcriptional processes. Implicated in tissue-specific regulation of gene transcription and alternative splicing of several pre-mRNAs. Binds to and stimulates transcription from the tumor suppressor TXNIP gene promoter; may thus be involved in tumor suppression. When associated with SAFB, binds to and stimulates transcription from the SREBF1 promoter. Associates with nascent mRNAs transcribed by RNA polymerase II. Component of the supraspliceosome complex that regulates pre-mRNA alternative splice site selection. Can either activate or suppress exon inclusion; acts additively with TRA2B to promote exon 7 inclusion of the survival motor neuron SMN2. Represses the splicing of MAPT/Tau exon 10. Binds preferentially to single-stranded 5'-CC[A/C]-rich RNA sequence motifs localized in a single-stranded conformation; probably binds RNA as a homodimer. Binds non-specifically to pre-mRNAs. Also plays a role in the cytoplasmic TNFR1 trafficking pathways; promotes both the IL-1-beta-mediated inducible proteolytic cleavage of TNFR1 ectodomains and the release of TNFR1 exosome-like vesicles to the extracellular compartment. The protein is RNA-binding motif protein, X chromosome (RBMX) of Bos taurus (Bovine).